A 783-amino-acid chain; its full sequence is Endonuclease MutS2 (783 aa).

Residue 328–335 coordinates ATP; that stretch reads GPNTGGKT. Positions 708–783 constitute a Smr domain; the sequence is LDLRGKRYEE…GSGCTIATLG (76 aa).

This sequence belongs to the DNA mismatch repair MutS family. MutS2 subfamily. Homodimer. Binds to stalled ribosomes, contacting rRNA.

In terms of biological role, endonuclease that is involved in the suppression of homologous recombination and thus may have a key role in the control of bacterial genetic diversity. Acts as a ribosome collision sensor, splitting the ribosome into its 2 subunits. Detects stalled/collided 70S ribosomes which it binds and splits by an ATP-hydrolysis driven conformational change. Acts upstream of the ribosome quality control system (RQC), a ribosome-associated complex that mediates the extraction of incompletely synthesized nascent chains from stalled ribosomes and their subsequent degradation. Probably generates substrates for RQC. The chain is Endonuclease MutS2 from Streptococcus thermophilus (strain ATCC BAA-491 / LMD-9).